Here is a 199-residue protein sequence, read N- to C-terminus: MMEFVYPHTHLVAGVDEVGRGPLVGAVVTAAVILDPAKPIVGLNDSKKLSEKRRLALCDEIKEKALCWSLGRAEPHEIDELNILHATMLAMQRAVAGLSIVPEFVLIDGNRCPSLPMPSLAVVKGDSRVAEISAASILAKVTRDAEMATLDLAFPHYGFAQHKGYPTAVHLQKLQEHGATEHHRRSFGPVKRALGLASN.

The region spanning 10-199 is the RNase H type-2 domain; the sequence is HLVAGVDEVG…VKRALGLASN (190 aa). Residues aspartate 16, glutamate 17, and aspartate 108 each coordinate a divalent metal cation.

This sequence belongs to the RNase HII family. It depends on Mn(2+) as a cofactor. Mg(2+) is required as a cofactor.

It localises to the cytoplasm. The enzyme catalyses Endonucleolytic cleavage to 5'-phosphomonoester.. Its function is as follows. Endonuclease that specifically degrades the RNA of RNA-DNA hybrids. The sequence is that of Ribonuclease HII from Klebsiella pneumoniae (strain 342).